The chain runs to 389 residues: UDP-GlcNAc:betaGal beta-1,3-N-acetylglucosaminyltransferase 8 (389 aa).

At 1-7 the chain is on the cytoplasmic side; sequence MRCRKCQ. Residues 8 to 24 traverse the membrane as a helical; Signal-anchor for type II membrane protein segment; the sequence is LCLSALLTLLGLKVYIE. The Lumenal portion of the chain corresponds to 25 to 389; it reads WTSESWLKKA…RHLWVPELQC (365 aa). The segment at 36-57 is disordered; that stretch reads PRGALPSPTPPNAEPTLPTNLS. N55 and N212 each carry an N-linked (GlcNAc...) asparagine glycan.

It belongs to the glycosyltransferase 31 family. Interacts with B3GNT2; this interaction greatly increases B3GNT2 catalytic activity, independently of B3GNT8 enzymatic activity.

It is found in the golgi apparatus membrane. It participates in protein modification; protein glycosylation. In terms of biological role, beta-1,3-N-acetylglucosaminyltransferase that plays a role in the elongation of specific branch structures of multiantennary N-glycans. Has strong activity towards tetraantennary N-glycans and 2,6 triantennary glycans. This chain is UDP-GlcNAc:betaGal beta-1,3-N-acetylglucosaminyltransferase 8, found in Mus musculus (Mouse).